A 622-amino-acid chain; its full sequence is Low affinity potassium transport system protein Kup (622 aa).

12 helical membrane passes run L9 to L29, V49 to L69, V103 to I123, P137 to I157, V165 to L185, V213 to A233, W247 to L267, P276 to A296, I337 to F357, L363 to T383, F396 to L416, and L419 to T439.

It belongs to the HAK/KUP transporter (TC 2.A.72) family.

The protein localises to the cell inner membrane. The enzyme catalyses K(+)(in) + H(+)(in) = K(+)(out) + H(+)(out). Functionally, responsible for the low-affinity transport of potassium into the cell. Likely operates as a K(+):H(+) symporter. The chain is Low affinity potassium transport system protein Kup from Salmonella typhi.